We begin with the raw amino-acid sequence, 436 residues long: tRNA-2-methylthio-N(6)-dimethylallyladenosine synthase (436 aa).

Positions 5-120 (KKLFIQTLGC…IKDVVDVKGA (116 aa)) constitute an MTTase N-terminal domain. The [4Fe-4S] cluster site is built by Cys-14, Cys-51, Cys-83, Cys-152, Cys-156, and Cys-159. Residues 138 to 372 (KTNKYRASVN…IELHKRYLEE (235 aa)) form the Radical SAM core domain. Residues 375–436 (PKLIGETLNI…RTSLKGEVVN (62 aa)) form the TRAM domain.

The protein belongs to the methylthiotransferase family. MiaB subfamily. Monomer. [4Fe-4S] cluster serves as cofactor.

The protein localises to the cytoplasm. It catalyses the reaction N(6)-dimethylallyladenosine(37) in tRNA + (sulfur carrier)-SH + AH2 + 2 S-adenosyl-L-methionine = 2-methylsulfanyl-N(6)-dimethylallyladenosine(37) in tRNA + (sulfur carrier)-H + 5'-deoxyadenosine + L-methionine + A + S-adenosyl-L-homocysteine + 2 H(+). Catalyzes the methylthiolation of N6-(dimethylallyl)adenosine (i(6)A), leading to the formation of 2-methylthio-N6-(dimethylallyl)adenosine (ms(2)i(6)A) at position 37 in tRNAs that read codons beginning with uridine. This is tRNA-2-methylthio-N(6)-dimethylallyladenosine synthase from Aliarcobacter butzleri (strain RM4018) (Arcobacter butzleri).